A 342-amino-acid chain; its full sequence is (Lyso)-N-acylphosphatidylethanolamine lipase (342 aa).

In terms of domain architecture, AB hydrolase-1 spans 70–324; sequence PLVMVHGFGG…IEGASHHVYA (255 aa).

This sequence belongs to the peptidase S33 family. ABHD4/ABHD5 subfamily.

It catalyses the reaction N-hexadecanoyl-1,2-di-(9Z-octadecenoyl)-sn-glycero-3-phosphoethanolamine + H2O = N-hexadecanoyl-1-(9Z-octadecenoyl)-sn-glycero-3-phosphoethanolamine + (9Z)-octadecenoate + H(+). The enzyme catalyses an N-acyl-1,2-diacyl-sn-glycero-3-phosphoethanolamine + H2O = N,1-diacyl-sn-glycero-3-phosphoethanolamine + a fatty acid + H(+). The catalysed reaction is N-hexadecanoyl-1-(9Z-octadecenoyl)-sn-glycero-3-phosphoethanolamine + H2O = N-hexadecanoyl-sn-glycero-3-phosphoethanolamine + (9Z)-octadecenoate + H(+). It carries out the reaction N-octadecanoyl-1-(9Z-octadecenoyl)-sn-glycero-3-phosphoethanolamine + H2O = N-octadecanoyl-sn-glycero-3-phospho-ethanolamine + (9Z)-octadecenoate + H(+). It catalyses the reaction N-eicosanoyl-1-(9Z-octadecenoyl)-sn-glycero-3-phosphoethanolamine + H2O = N-eicosanoyl-sn-glycero-3-phosphoethanolamine + (9Z)-octadecenoate + H(+). The enzyme catalyses N,1-di-(9Z-octadecenoyl)-sn-glycero-3-phosphoethanolamine + H2O = N-(9Z-octadecenoyl)-sn-glycero-3-phosphoethanolamine + (9Z)-octadecenoate + H(+). The catalysed reaction is N-(5Z,8Z,11Z,14Z-eicosatetraenoyl)-1-(9Z-octadecenoyl)-sn-glycero-3-phosphoethanolamine + H2O = N-(5Z,8Z,11Z,14Z-eicosatetraenoyl)-sn-glycero-3-phosphoethanolamine + (9Z)-octadecenoate + H(+). It carries out the reaction 1-octadecanoyl-2-(9Z-octadecenoyl)-sn-glycero-3-phospho-(N-hexadecanoyl)-serine + H2O = 1-octadecanoyl-2-hydroxy-sn-glycero-3-phospho-(N-hexadecanoyl)-serine + (9Z)-octadecenoate + H(+). It catalyses the reaction 1-O-(1Z-octadecenoyl)-2-(9Z-octadecenoyl)-sn-glycero-3-phospho-N-hexadecanoyl-ethanolamine + H2O = 1-O-(1Z-octadecenyl)-sn-glycero-3-phospho-N-hexadecanoyl-ethanolamine + (9Z)-octadecenoate + H(+). The enzyme catalyses N,1-diacyl-sn-glycero-3-phosphoethanolamine + H2O = N-acyl-sn-glycero-3-phosphoethanolamine + a fatty acid + H(+). Lysophospholipase selective for N-acyl phosphatidylethanolamine (NAPE). Contributes to the biosynthesis of N-acyl ethanolamines, including the endocannabinoid anandamide by hydrolyzing the sn-1 and sn-2 acyl chains from N-acyl phosphatidylethanolamine (NAPE) generating glycerophospho-N-acyl ethanolamine (GP-NAE), an intermediate for N-acyl ethanolamine biosynthesis. Hydrolyzes substrates bearing saturated, monounsaturated, polyunsaturated N-acyl chains. Shows no significant activity towards other lysophospholipids, including lysophosphatidylcholine, lysophosphatidylethanolamine and lysophosphatidylserine. The polypeptide is (Lyso)-N-acylphosphatidylethanolamine lipase (Bos taurus (Bovine)).